Reading from the N-terminus, the 640-residue chain is Endoglucanase 2 (640 aa).

A signal peptide spans 1–34 (MARGGGAAGVSMAHHLGIALVVLVFAAMAQVARG). The active-site Nucleophile is aspartate 93. Catalysis depends on residues histidine 428, aspartate 480, and glutamate 489. Positions 512–640 (RARGRLGQSL…DVWVTGYKLV (129 aa)) are cleaved as a propeptide — removed in mature form. An N-linked (GlcNAc...) asparagine glycan is attached at asparagine 528.

This sequence belongs to the glycosyl hydrolase 9 (cellulase E) family. In terms of tissue distribution, expressed in roots and flowers.

It is found in the secreted. The enzyme catalyses Endohydrolysis of (1-&gt;4)-beta-D-glucosidic linkages in cellulose, lichenin and cereal beta-D-glucans.. Functionally, hydrolyzes 1,4-beta-glycosyl linkages of 1,4-beta-glucans and 1,3-1,4-beta-glucans. Possesses broad substrate specificity for hemicelluloses of type II cell walls. Substrate preference is carboxymethyl-cellulose &gt; 1,3-1,4-beta-glucan &gt; lichenan &gt; arabinoxylan &gt; phospho-swollen cellulose &gt; xylan &gt; glucomannan. May participate in lateral root development. The sequence is that of Endoglucanase 2 (GLU5) from Oryza sativa subsp. japonica (Rice).